A 263-amino-acid polypeptide reads, in one-letter code: Ribosomal RNA large subunit methyltransferase E (263 aa).

The tract at residues 1 to 34 is disordered; the sequence is MSSAEGPKSGGGSKGSKSEASSRVRGSAPTGSRD. Residues Gly102, Trp104, Asp126, Asp142, and Asp166 each contribute to the S-adenosyl-L-methionine site. Lys206 functions as the Proton acceptor in the catalytic mechanism.

It belongs to the class I-like SAM-binding methyltransferase superfamily. RNA methyltransferase RlmE family.

The protein localises to the cytoplasm. It catalyses the reaction uridine(2552) in 23S rRNA + S-adenosyl-L-methionine = 2'-O-methyluridine(2552) in 23S rRNA + S-adenosyl-L-homocysteine + H(+). Its function is as follows. Specifically methylates the uridine in position 2552 of 23S rRNA at the 2'-O position of the ribose in the fully assembled 50S ribosomal subunit. This is Ribosomal RNA large subunit methyltransferase E from Rhodospirillum rubrum (strain ATCC 11170 / ATH 1.1.1 / DSM 467 / LMG 4362 / NCIMB 8255 / S1).